Here is a 311-residue protein sequence, read N- to C-terminus: Malate dehydrogenase (311 aa).

NAD(+) contacts are provided by residues 10-15 and Asp35; that span reads GAGRVG. Residues Arg84 and Arg90 each contribute to the substrate site. Residues Asn97 and 120–122 contribute to the NAD(+) site; that span reads VTN. Residues Asn122 and Arg153 each contribute to the substrate site. His177 serves as the catalytic Proton acceptor.

The protein belongs to the LDH/MDH superfamily. MDH type 3 family.

It carries out the reaction (S)-malate + NAD(+) = oxaloacetate + NADH + H(+). Catalyzes the reversible oxidation of malate to oxaloacetate. The protein is Malate dehydrogenase of Nitrosococcus oceani (strain ATCC 19707 / BCRC 17464 / JCM 30415 / NCIMB 11848 / C-107).